Consider the following 333-residue polypeptide: GTPase Obg (333 aa).

The 159-residue stretch at 1–159 (MKFIDQTIIQ…RDIQLELILI (159 aa)) folds into the Obg domain. Positions 160-332 (ADVGTLGMPN…LCSDIAFYLQ (173 aa)) constitute an OBG-type G domain. GTP contacts are provided by residues 166-173 (GMPNAGKS), 191-195 (FTTLN), 212-215 (DIPG), 282-285 (NKID), and 313-315 (SSI). 2 residues coordinate Mg(2+): serine 173 and threonine 193.

It belongs to the TRAFAC class OBG-HflX-like GTPase superfamily. OBG GTPase family. Monomer. Requires Mg(2+) as cofactor.

Its subcellular location is the cytoplasm. Its function is as follows. An essential GTPase which binds GTP, GDP and possibly (p)ppGpp with moderate affinity, with high nucleotide exchange rates and a fairly low GTP hydrolysis rate. Plays a role in control of the cell cycle, stress response, ribosome biogenesis and in those bacteria that undergo differentiation, in morphogenesis control. The chain is GTPase Obg from Buchnera aphidicola subsp. Schizaphis graminum (strain Sg).